The chain runs to 294 residues: Bifunctional protein FolD 1 (294 aa).

Residues 165–167, Ser-190, and Thr-231 contribute to the NADP(+) site; that span reads GRS.

Belongs to the tetrahydrofolate dehydrogenase/cyclohydrolase family. In terms of assembly, homodimer.

The enzyme catalyses (6R)-5,10-methylene-5,6,7,8-tetrahydrofolate + NADP(+) = (6R)-5,10-methenyltetrahydrofolate + NADPH. It carries out the reaction (6R)-5,10-methenyltetrahydrofolate + H2O = (6R)-10-formyltetrahydrofolate + H(+). Its pathway is one-carbon metabolism; tetrahydrofolate interconversion. In terms of biological role, catalyzes the oxidation of 5,10-methylenetetrahydrofolate to 5,10-methenyltetrahydrofolate and then the hydrolysis of 5,10-methenyltetrahydrofolate to 10-formyltetrahydrofolate. This chain is Bifunctional protein FolD 1, found in Paenarthrobacter aurescens (strain TC1).